The primary structure comprises 126 residues: Profilin (126 aa).

This sequence belongs to the profilin family. Occurs in many kinds of cells as a complex with monomeric actin in a 1:1 ratio. Expressed in ovary and head.

The protein resides in the cytoplasm. The protein localises to the cytoskeleton. Functionally, binds to actin and affects the structure of the cytoskeleton. At high concentrations, profilin prevents the polymerization of actin, whereas it enhances it at low concentrations. By binding to PIP2, it may inhibit the formation of IP3 and DG. This profilin is required for intercellular cytoplasm transport during Drosophila oogenesis. Function in neurons is essential for adult survival, and is important for climbing behavior and activity. This Drosophila melanogaster (Fruit fly) protein is Profilin (chic).